The sequence spans 463 residues: Cysteine--tRNA ligase (463 aa).

Cys33 is a binding site for Zn(2+). Positions 35–45 (PTVYDFAHIGN) match the 'HIGH' region motif. Residues Cys221, His246, and Glu250 each contribute to the Zn(2+) site. The short motif at 279 to 283 (KMSKS) is the 'KMSKS' region element. Position 282 (Lys282) interacts with ATP.

This sequence belongs to the class-I aminoacyl-tRNA synthetase family. Monomer. Requires Zn(2+) as cofactor.

It is found in the cytoplasm. It catalyses the reaction tRNA(Cys) + L-cysteine + ATP = L-cysteinyl-tRNA(Cys) + AMP + diphosphate. The polypeptide is Cysteine--tRNA ligase (Rhizobium rhizogenes (strain K84 / ATCC BAA-868) (Agrobacterium radiobacter)).